Here is a 394-residue protein sequence, read N- to C-terminus: Glutamyl-tRNA reductase (394 aa).

Substrate is bound by residues 45–48 (TCNR), serine 99, 104–106 (EEQ), and glutamine 110. The Nucleophile role is filled by cysteine 46. Position 175–180 (175–180 (GLGNIG)) interacts with NADP(+).

This sequence belongs to the glutamyl-tRNA reductase family. As to quaternary structure, homodimer.

It carries out the reaction (S)-4-amino-5-oxopentanoate + tRNA(Glu) + NADP(+) = L-glutamyl-tRNA(Glu) + NADPH + H(+). It participates in porphyrin-containing compound metabolism; protoporphyrin-IX biosynthesis; 5-aminolevulinate from L-glutamyl-tRNA(Glu): step 1/2. Catalyzes the NADPH-dependent reduction of glutamyl-tRNA(Glu) to glutamate 1-semialdehyde (GSA). The protein is Glutamyl-tRNA reductase of Caldicellulosiruptor saccharolyticus (strain ATCC 43494 / DSM 8903 / Tp8T 6331).